The chain runs to 240 residues: Phosphoribosylaminoimidazole-succinocarboxamide synthase (240 aa).

It belongs to the SAICAR synthetase family.

It catalyses the reaction 5-amino-1-(5-phospho-D-ribosyl)imidazole-4-carboxylate + L-aspartate + ATP = (2S)-2-[5-amino-1-(5-phospho-beta-D-ribosyl)imidazole-4-carboxamido]succinate + ADP + phosphate + 2 H(+). It functions in the pathway purine metabolism; IMP biosynthesis via de novo pathway; 5-amino-1-(5-phospho-D-ribosyl)imidazole-4-carboxamide from 5-amino-1-(5-phospho-D-ribosyl)imidazole-4-carboxylate: step 1/2. This chain is Phosphoribosylaminoimidazole-succinocarboxamide synthase, found in Wolbachia sp. subsp. Brugia malayi (strain TRS).